The chain runs to 127 residues: UPF0716 protein YtzA (127 aa).

The next 4 membrane-spanning stretches (helical) occupy residues 3–22 (FLFL…FLFL), 26–46 (IGIL…AAAA), 70–90 (AIAD…PGFL), and 93–115 (LAGA…FKWL).

This sequence belongs to the UPF0716 (FxsA) family.

The protein localises to the cell membrane. In Bacillus subtilis (strain 168), this protein is UPF0716 protein YtzA (ytzA).